A 201-amino-acid polypeptide reads, in one-letter code: LexA repressor (201 aa).

A DNA-binding region (H-T-H motif) is located at residues 28–48 (MRDIAAHLRISGTLGVSKHLT). Catalysis depends on for autocatalytic cleavage activity residues Ser-120 and Lys-157.

This sequence belongs to the peptidase S24 family. Homodimer.

The enzyme catalyses Hydrolysis of Ala-|-Gly bond in repressor LexA.. In terms of biological role, represses a number of genes involved in the response to DNA damage (SOS response), including recA and lexA. In the presence of single-stranded DNA, RecA interacts with LexA causing an autocatalytic cleavage which disrupts the DNA-binding part of LexA, leading to derepression of the SOS regulon and eventually DNA repair. The chain is LexA repressor from Geobacter metallireducens (strain ATCC 53774 / DSM 7210 / GS-15).